The primary structure comprises 289 residues: Mitochondrial fission regulator 1-like (289 aa).

Threonine 27 is modified (phosphothreonine). 8 positions are modified to phosphoserine: serine 38, serine 100, serine 107, serine 221, serine 222, serine 235, serine 258, and serine 270.

The protein belongs to the MTFR1 family. Post-translationally, phosphorylated by AMPK. Upon stress, phosphorylation by AMPK is sufficient to induce mitochondrial fragmentation.

The protein localises to the mitochondrion outer membrane. In terms of biological role, mitochondrial protein required for adaptation of miochondrial dynamics to metabolic changes. Regulates mitochondrial morphology at steady state and mediates AMPK-dependent stress-induced mitochondrial fragmentation via the control of OPA1 levels. In Rattus norvegicus (Rat), this protein is Mitochondrial fission regulator 1-like (Mtfr1l).